A 91-amino-acid chain; its full sequence is DNA-directed RNA polymerase subunit omega (91 aa).

This sequence belongs to the RNA polymerase subunit omega family. The RNAP catalytic core consists of 2 alpha, 1 beta, 1 beta' and 1 omega subunit. When a sigma factor is associated with the core the holoenzyme is formed, which can initiate transcription.

It catalyses the reaction RNA(n) + a ribonucleoside 5'-triphosphate = RNA(n+1) + diphosphate. Promotes RNA polymerase assembly. Latches the N- and C-terminal regions of the beta' subunit thereby facilitating its interaction with the beta and alpha subunits. The protein is DNA-directed RNA polymerase subunit omega of Serratia proteamaculans (strain 568).